Here is a 557-residue protein sequence, read N- to C-terminus: Kelch repeat and BTB domain-containing protein 2 (557 aa).

A BTB domain is found at 26–95 (CDVIITIGDG…LYNRHISSMN (70 aa)). The region spanning 133 to 223 (HKLYEMVHIP…CIDIQNLDKK (91 aa)) is the BACK domain. Kelch repeat units follow at residues 305–352 (EIII…VIDD), 353–399 (TIYA…VLDQ), and 401–464 (IYII…SHKD).

Interacts (via BTB domain) with host CUL3.

The protein resides in the host cytoplasm. Probable substrate-specific adapter of CUL3-containing E3 ubiquitin-protein ligases which mediate the ubiquitination and subsequent proteasomal degradation of host target proteins. This chain is Kelch repeat and BTB domain-containing protein 2 (KBTB2), found in Bos taurus (Bovine).